The chain runs to 306 residues: Formimidoylglutamase (306 aa).

The segment covering 1–13 has biased composition (polar residues); the sequence is MFQNATDWTPTST. A disordered region spans residues 1 to 36; the sequence is MFQNATDWTPTSTDPRDEQFGGVVEPVPTPSDADDY. Positions 123, 147, 149, 151, 234, and 236 each coordinate Mn(2+).

The protein belongs to the arginase family. Mn(2+) is required as a cofactor.

The catalysed reaction is N-formimidoyl-L-glutamate + H2O = formamide + L-glutamate. It functions in the pathway amino-acid degradation; L-histidine degradation into L-glutamate; L-glutamate from N-formimidoyl-L-glutamate (hydrolase route): step 1/1. Catalyzes the conversion of N-formimidoyl-L-glutamate to L-glutamate and formamide. The sequence is that of Formimidoylglutamase from Halobacterium salinarum (strain ATCC 29341 / DSM 671 / R1).